The sequence spans 388 residues: Chorismate synthase (388 aa).

The NADP(+) site is built by R39 and R45. FMN is bound by residues 130-132, 251-252, G296, 311-315, and R337; these read RSS, NA, and KPIPT.

It belongs to the chorismate synthase family. Homotetramer. The cofactor is FMNH2.

It carries out the reaction 5-O-(1-carboxyvinyl)-3-phosphoshikimate = chorismate + phosphate. The protein operates within metabolic intermediate biosynthesis; chorismate biosynthesis; chorismate from D-erythrose 4-phosphate and phosphoenolpyruvate: step 7/7. Functionally, catalyzes the anti-1,4-elimination of the C-3 phosphate and the C-6 proR hydrogen from 5-enolpyruvylshikimate-3-phosphate (EPSP) to yield chorismate, which is the branch point compound that serves as the starting substrate for the three terminal pathways of aromatic amino acid biosynthesis. This reaction introduces a second double bond into the aromatic ring system. The polypeptide is Chorismate synthase (Streptococcus pneumoniae serotype 19F (strain G54)).